Here is a 369-residue protein sequence, read N- to C-terminus: Flagellar P-ring protein (369 aa).

Residues 1–22 (MIKLKQLIAATLLLSTAFGVHA) form the signal peptide.

It belongs to the FlgI family. As to quaternary structure, the basal body constitutes a major portion of the flagellar organelle and consists of four rings (L,P,S, and M) mounted on a central rod.

The protein localises to the periplasm. The protein resides in the bacterial flagellum basal body. Functionally, assembles around the rod to form the L-ring and probably protects the motor/basal body from shearing forces during rotation. The sequence is that of Flagellar P-ring protein from Pseudomonas syringae pv. syringae (strain B728a).